A 140-amino-acid polypeptide reads, in one-letter code: Transcription antitermination protein NusB (140 aa).

It belongs to the NusB family.

In terms of biological role, involved in transcription antitermination. Required for transcription of ribosomal RNA (rRNA) genes. Binds specifically to the boxA antiterminator sequence of the ribosomal RNA (rrn) operons. The chain is Transcription antitermination protein NusB from Sorangium cellulosum (strain So ce56) (Polyangium cellulosum (strain So ce56)).